The chain runs to 545 residues: CTP synthase (545 aa).

The tract at residues 1 to 266 (MTTNYIFVTG…DDYICKRFSL (266 aa)) is amidoligase domain. Serine 14 contacts CTP. A UTP-binding site is contributed by serine 14. ATP contacts are provided by residues 15-20 (SLGKGI) and aspartate 72. Positions 72 and 140 each coordinate Mg(2+). Residues 147 to 149 (DIE), 187 to 192 (KTKPTQ), and lysine 223 contribute to the CTP site. Residues 187-192 (KTKPTQ) and lysine 223 each bind UTP. 239–241 (KDV) provides a ligand contact to ATP. The region spanning 291 to 542 (TIGMVGKYIE…VKAASEHQKR (252 aa)) is the Glutamine amidotransferase type-1 domain. L-glutamine is bound at residue glycine 352. Cysteine 379 functions as the Nucleophile; for glutamine hydrolysis in the catalytic mechanism. L-glutamine-binding positions include 380 to 383 (LGMQ), glutamate 403, and arginine 470. Catalysis depends on residues histidine 515 and glutamate 517.

The protein belongs to the CTP synthase family. As to quaternary structure, homotetramer.

It carries out the reaction UTP + L-glutamine + ATP + H2O = CTP + L-glutamate + ADP + phosphate + 2 H(+). The enzyme catalyses L-glutamine + H2O = L-glutamate + NH4(+). It catalyses the reaction UTP + NH4(+) + ATP = CTP + ADP + phosphate + 2 H(+). Its pathway is pyrimidine metabolism; CTP biosynthesis via de novo pathway; CTP from UDP: step 2/2. With respect to regulation, allosterically activated by GTP, when glutamine is the substrate; GTP has no effect on the reaction when ammonia is the substrate. The allosteric effector GTP functions by stabilizing the protein conformation that binds the tetrahedral intermediate(s) formed during glutamine hydrolysis. Inhibited by the product CTP, via allosteric rather than competitive inhibition. Functionally, catalyzes the ATP-dependent amination of UTP to CTP with either L-glutamine or ammonia as the source of nitrogen. Regulates intracellular CTP levels through interactions with the four ribonucleotide triphosphates. This chain is CTP synthase, found in Salmonella schwarzengrund (strain CVM19633).